Consider the following 621-residue polypeptide: Ubiquitin-like-specific protease 1 (621 aa).

At serine 2 the chain carries N-acetylserine. Serine 21 and serine 25 each carry phosphoserine. 2 disordered regions span residues 116–150 (FDGS…ENYS) and 169–196 (RRRI…SNCD). Low complexity predominate over residues 124–141 (SGNSDVESRSSGSRSSDV). At threonine 179 the chain carries Phosphothreonine. The segment covering 179 to 196 (TPSTSPISSLASQKSNCD) has biased composition (polar residues). Serine 264 is modified (phosphoserine). Positions 432–621 (NIEITVRDFK…AHLILTDALK (190 aa)) are protease. Residues histidine 514, aspartate 531, and cysteine 580 contribute to the active site.

This sequence belongs to the peptidase C48 family.

It catalyses the reaction Hydrolysis of the alpha-linked peptide bond in the sequence Gly-Gly-|-Ala-Thr-Tyr at the C-terminal end of the small ubiquitin-like modifier (SUMO) propeptide, Smt3, leading to the mature form of the protein. A second reaction involves the cleavage of an epsilon-linked peptide bond between the C-terminal glycine of the mature SUMO and the lysine epsilon-amino group of the target protein.. Its function is as follows. Protease that catalyzes two essential functions in the SUMO pathway: processing of full-length SMT3 to its mature form and deconjugation of SMT3 from targeted proteins. Has an essential role in the G2/M phase of the cell cycle. The sequence is that of Ubiquitin-like-specific protease 1 (ULP1) from Saccharomyces cerevisiae (strain ATCC 204508 / S288c) (Baker's yeast).